A 102-amino-acid chain; its full sequence is Large ribosomal subunit protein bL21 (102 aa).

Belongs to the bacterial ribosomal protein bL21 family. As to quaternary structure, part of the 50S ribosomal subunit. Contacts protein L20.

This protein binds to 23S rRNA in the presence of protein L20. The sequence is that of Large ribosomal subunit protein bL21 from Arthrobacter sp. (strain FB24).